The sequence spans 151 residues: Superoxide dismutase [Cu-Zn] 2 (151 aa).

Cu cation contacts are provided by H44, H46, and H61. A disulfide bond links C55 and C144. Residues H61, H69, H78, and D81 each coordinate Zn(2+). Residue H118 participates in Cu cation binding.

The protein belongs to the Cu-Zn superoxide dismutase family. Homodimer. It depends on Cu cation as a cofactor. Zn(2+) serves as cofactor.

Its subcellular location is the cytoplasm. It carries out the reaction 2 superoxide + 2 H(+) = H2O2 + O2. In terms of biological role, destroys radicals which are normally produced within the cells and which are toxic to biological systems. This chain is Superoxide dismutase [Cu-Zn] 2 (SODCC.1), found in Zea mays (Maize).